The chain runs to 254 residues: 5-oxoprolinase subunit A (254 aa).

The protein belongs to the LamB/PxpA family. In terms of assembly, forms a complex composed of PxpA, PxpB and PxpC.

It catalyses the reaction 5-oxo-L-proline + ATP + 2 H2O = L-glutamate + ADP + phosphate + H(+). Its function is as follows. Catalyzes the cleavage of 5-oxoproline to form L-glutamate coupled to the hydrolysis of ATP to ADP and inorganic phosphate. This chain is 5-oxoprolinase subunit A, found in Burkholderia ambifaria (strain MC40-6).